We begin with the raw amino-acid sequence, 414 residues long: Light-independent protochlorophyllide reductase subunit N (414 aa).

Cys-16, Cys-41, and Cys-98 together coordinate [4Fe-4S] cluster.

The protein belongs to the BchN/ChlN family. Protochlorophyllide reductase is composed of three subunits; BchL, BchN and BchB. Forms a heterotetramer of two BchB and two BchN subunits. [4Fe-4S] cluster is required as a cofactor.

It catalyses the reaction chlorophyllide a + oxidized 2[4Fe-4S]-[ferredoxin] + 2 ADP + 2 phosphate = protochlorophyllide a + reduced 2[4Fe-4S]-[ferredoxin] + 2 ATP + 2 H2O. It participates in porphyrin-containing compound metabolism; bacteriochlorophyll biosynthesis (light-independent). In terms of biological role, component of the dark-operative protochlorophyllide reductase (DPOR) that uses Mg-ATP and reduced ferredoxin to reduce ring D of protochlorophyllide (Pchlide) to form chlorophyllide a (Chlide). This reaction is light-independent. The NB-protein (BchN-BchB) is the catalytic component of the complex. The sequence is that of Light-independent protochlorophyllide reductase subunit N from Roseiflexus castenholzii (strain DSM 13941 / HLO8).